A 122-amino-acid chain; its full sequence is MSKKIHEFNDIIRKLRKELFGKGPERIHTVFVENMAVSTLYGNLSASEQFIARTPEGREMVHAARTSLIQDLYSKQTPEGMEELMGAKLVHLFSDIKIEENIAVSVFVFDRKIDEQKEALQS.

This is an uncharacterized protein from Bacillus subtilis (strain 168).